A 44-amino-acid polypeptide reads, in one-letter code: NKPSLSIVNPLDVLRQRLLLEIARRQMKENTRQVELNRAILKNV.

Position 44 is a valine amide (valine 44).

The protein resides in the secreted. Functionally, regulation of fluid secretion. Stimulates primary urine secretion by Malpighian tubules and causes a dose-dependent stimulation of cAMP levels in the tubules. May act as clearance peptide in that it may remove metabolic waste from the hemolymph. The protein is Diuretic hormone of Stomoxys calcitrans (Stable fly).